Reading from the N-terminus, the 368-residue chain is Zinc finger protein 24 (368 aa).

A Glycyl lysine isopeptide (Lys-Gly) (interchain with G-Cter in SUMO2) cross-link involves residue K22. Residue K27 forms a Glycyl lysine isopeptide (Lys-Gly) (interchain with G-Cter in SUMO1); alternate linkage. Residue K27 forms a Glycyl lysine isopeptide (Lys-Gly) (interchain with G-Cter in SUMO2); alternate linkage. One can recognise an SCAN box domain in the interval 52–134; it reads RQRFRQFGYQ…TVLEDLESEL (83 aa). A phosphoserine mark is found at S132 and S142. Glycyl lysine isopeptide (Lys-Gly) (interchain with G-Cter in SUMO2) cross-links involve residues K147, K177, and K236. The segment at 251–273 adopts a C2H2-type 1 zinc-finger fold; the sequence is HICDECGKHFSQGSALILHQRIH. Positions 251-301 are necessary and sufficient for nuclear localization; sequence HICDECGKHFSQGSALILHQRIHSGEKPYGCVECGKAFSRSSILVQHQRVH. S274 bears the Phosphoserine mark. Glycyl lysine isopeptide (Lys-Gly) (interchain with G-Cter in SUMO2) cross-links involve residues K277 and K286. 3 C2H2-type zinc fingers span residues 279–301, 307–329, and 335–357; these read YGCVECGKAFSRSSILVQHQRVH, YKCLECGKAFSQNSGLINHQRIH, and YECVQCGKSYSQSSNLFRHXXRH. At S292 the chain carries Phosphoserine. Y335 is modified (phosphotyrosine). Residues K361 and K367 each participate in a glycyl lysine isopeptide (Lys-Gly) (interchain with G-Cter in SUMO2) cross-link.

Belongs to the krueppel C2H2-type zinc-finger protein family. Post-translationally, sumoylated.

The protein localises to the nucleus. Transcription factor required for myelination of differentiated oligodendrocytes. Required for the conversion of oligodendrocytes from the premyelinating to the myelinating state. In the developing central nervous system (CNS), involved in the maintenance in the progenitor stage by promoting the cell cycle. Specifically binds to the 5'-TCAT-3' DNA sequence. Has transcription repressor activity in vitro. This Pan troglodytes (Chimpanzee) protein is Zinc finger protein 24 (ZNF24).